We begin with the raw amino-acid sequence, 70 residues long: Large ribosomal subunit protein uL29 (70 aa).

Belongs to the universal ribosomal protein uL29 family.

This is Large ribosomal subunit protein uL29 from Clostridium botulinum (strain ATCC 19397 / Type A).